Reading from the N-terminus, the 388-residue chain is Na(+)/H(+) antiporter NhaA (388 aa).

Topologically, residues 1-11 are cytoplasmic; that stretch reads MKHLHRFFSSD. The chain crosses the membrane as a helical span at residues 12–31; sequence ASGGIILIIAAILAMIMANS. Topologically, residues 32-58 are periplasmic; it reads GATSGWYHDFLETPVQLRVGSLEINKN. The chain crosses the membrane as a helical span at residues 59–80; it reads MLLWINDALMAVFFLLVGLEVK. At 81-96 the chain is on the cytoplasmic side; it reads RELMQGSLASLRQAAF. The chain crosses the membrane as a helical span at residues 97–116; it reads PVIAAIGGMIVPALLYLAFN. The Periplasmic segment spans residues 117–122; sequence YADPIT. A helical transmembrane segment spans residues 123–130; that stretch reads REGWAIPA. Over 131–154 the chain is Cytoplasmic; the sequence is ATDIAFALGVLALLGSRVPLVLKI. A helical transmembrane segment spans residues 155 to 176; the sequence is FLMALAIIDDLGAIIIIALFYT. Residues 177 to 180 lie on the Periplasmic side of the membrane; sequence NDLS. A helical membrane pass occupies residues 181-200; the sequence is MASLGVAAVAIAVLAVLNLC. Residues 201–204 lie on the Cytoplasmic side of the membrane; that stretch reads GVRR. Residues 205–222 form a helical membrane-spanning segment; it reads TGVYILVGVVLWTAVLKS. A topological domain (periplasmic) is located at residue glycine 223. The chain crosses the membrane as a helical span at residues 224-236; it reads VHATLAGVIVGFF. Over 237–253 the chain is Cytoplasmic; that stretch reads IPLKEKHGRSPAKRLEH. The helical transmembrane segment at 254–272 threads the bilayer; it reads VLHPWVAYLILPLFAFANA. Residues 273–286 lie on the Periplasmic side of the membrane; it reads GVSLQGVTLDGLTS. Residues 287–310 form a helical membrane-spanning segment; that stretch reads ILPLGIIAGLLIGKPLGISLFCWL. Residues 311–339 lie on the Cytoplasmic side of the membrane; the sequence is ALRLKLAHLPEGTTYQQIMVVGILCGIGF. A helical transmembrane segment spans residues 340-350; sequence TMSIFIASLAF. The Periplasmic portion of the chain corresponds to 351 to 357; that stretch reads GSVDPEL. Residues 358-380 traverse the membrane as a helical segment; that stretch reads INWAKLGILVGSISSAVIGYSWL. Residues 381–388 lie on the Cytoplasmic side of the membrane; the sequence is RVRLRPSV.

This sequence belongs to the NhaA Na(+)/H(+) (TC 2.A.33) antiporter family.

Its subcellular location is the cell inner membrane. The enzyme catalyses Na(+)(in) + 2 H(+)(out) = Na(+)(out) + 2 H(+)(in). Na(+)/H(+) antiporter that extrudes sodium in exchange for external protons. In Shigella flexneri, this protein is Na(+)/H(+) antiporter NhaA.